The chain runs to 90 residues: Acylphosphatase (90 aa).

Positions 5 to 90 (CLKAWVTGRV…DPPPGTFELG (86 aa)) constitute an Acylphosphatase-like domain. Catalysis depends on residues Arg20 and Asn38.

This sequence belongs to the acylphosphatase family.

The catalysed reaction is an acyl phosphate + H2O = a carboxylate + phosphate + H(+). This is Acylphosphatase (acyP) from Chromohalobacter salexigens (strain ATCC BAA-138 / DSM 3043 / CIP 106854 / NCIMB 13768 / 1H11).